The primary structure comprises 177 residues: Large ribosomal subunit protein uL6 (177 aa).

This sequence belongs to the universal ribosomal protein uL6 family. As to quaternary structure, part of the 50S ribosomal subunit.

Functionally, this protein binds to the 23S rRNA, and is important in its secondary structure. It is located near the subunit interface in the base of the L7/L12 stalk, and near the tRNA binding site of the peptidyltransferase center. The sequence is that of Large ribosomal subunit protein uL6 from Shewanella baltica (strain OS223).